The primary structure comprises 567 residues: Malate synthase, glyoxysomal (567 aa).

The active-site Proton acceptor is the Arg182. Residue Asp468 is the Proton donor of the active site. The Microbody targeting signal signature appears at 565-567; sequence SRL.

The protein belongs to the malate synthase family.

The protein resides in the glyoxysome. The catalysed reaction is glyoxylate + acetyl-CoA + H2O = (S)-malate + CoA + H(+). Its pathway is carbohydrate metabolism; glyoxylate cycle; (S)-malate from isocitrate: step 2/2. The polypeptide is Malate synthase, glyoxysomal (Ricinus communis (Castor bean)).